The chain runs to 271 residues: Indole-3-glycerol phosphate synthase (271 aa).

This sequence belongs to the TrpC family.

It carries out the reaction 1-(2-carboxyphenylamino)-1-deoxy-D-ribulose 5-phosphate + H(+) = (1S,2R)-1-C-(indol-3-yl)glycerol 3-phosphate + CO2 + H2O. It functions in the pathway amino-acid biosynthesis; L-tryptophan biosynthesis; L-tryptophan from chorismate: step 4/5. This Haloarcula marismortui (strain ATCC 43049 / DSM 3752 / JCM 8966 / VKM B-1809) (Halobacterium marismortui) protein is Indole-3-glycerol phosphate synthase.